Reading from the N-terminus, the 149-residue chain is Ribonuclease pancreatic alpha-type (149 aa).

The N-terminal stretch at 1–25 is a signal peptide; sequence MGLEKSFILFSLLVLVLGWVQPSLG. Substrate-binding residues include Lys-32 and Arg-35. His-37 (proton acceptor) is an active-site residue. Cystine bridges form between Cys-51–Cys-109, Cys-65–Cys-120, Cys-83–Cys-135, and Cys-90–Cys-97. Substrate contacts are provided by residues 66 to 70, Lys-91, and Arg-110; that span reads KPVNT. Catalysis depends on His-144, which acts as the Proton donor.

This sequence belongs to the pancreatic ribonuclease family. Monomer.

The protein localises to the secreted. It carries out the reaction an [RNA] containing cytidine + H2O = an [RNA]-3'-cytidine-3'-phosphate + a 5'-hydroxy-ribonucleotide-3'-[RNA].. The enzyme catalyses an [RNA] containing uridine + H2O = an [RNA]-3'-uridine-3'-phosphate + a 5'-hydroxy-ribonucleotide-3'-[RNA].. Its function is as follows. Endonuclease that catalyzes the cleavage of RNA on the 3' side of pyrimidine nucleotides. Acts on single-stranded and double-stranded RNA. This chain is Ribonuclease pancreatic alpha-type, found in Rattus fuscipes (Bush rat).